Consider the following 156-residue polypeptide: Transcription antitermination protein NusB (156 aa).

Belongs to the NusB family.

Its function is as follows. Involved in transcription antitermination. Required for transcription of ribosomal RNA (rRNA) genes. Binds specifically to the boxA antiterminator sequence of the ribosomal RNA (rrn) operons. In Mycolicibacterium paratuberculosis (strain ATCC BAA-968 / K-10) (Mycobacterium paratuberculosis), this protein is Transcription antitermination protein NusB.